The primary structure comprises 215 residues: MERNKLARQIIDTCLEMTRLGLNQGTAGNVSVRYQDGMLITPTGIPYEKLTESHIVFIDGNGKHEEGKLPSSEWRFHMAAYQSRPDANAVVHNHAVHCTAVSILNRPIPAIHYMIAAAGGNSIPCAPYATFGTRELSEHVALALKNRKATLLQHHGLIACEVNLEKALWLAHEVEVLAQLYLTTLAITDPVPVLSDEEIAVVLEKFKTYGLRIEE.

Residues 28–29, 43–44, and 71–72 each bind substrate; these read GN, TG, and SS. Glutamate 73 serves as the catalytic Proton donor/acceptor. Positions 73, 92, 94, and 155 each coordinate Zn(2+).

Belongs to the aldolase class II family. AraD/FucA subfamily. As to quaternary structure, homotetramer. It depends on Zn(2+) as a cofactor.

It catalyses the reaction L-fuculose 1-phosphate = (S)-lactaldehyde + dihydroxyacetone phosphate. The protein operates within carbohydrate degradation; L-fucose degradation; L-lactaldehyde and glycerone phosphate from L-fucose: step 3/3. Functionally, involved in the degradation of L-fucose and D-arabinose. Catalyzes the reversible cleavage of L-fuculose 1-phosphate (Fuc1P) to yield dihydroxyacetone phosphate (DHAP) and L-lactaldehyde. The chain is L-fuculose phosphate aldolase from Escherichia coli O157:H7.